Here is a 164-residue protein sequence, read N- to C-terminus: Lipoprotein signal peptidase (164 aa).

A run of 4 helical transmembrane segments spans residues 8-28 (IVAA…LLFV), 39-59 (VTPF…GWFQ), 64-84 (VGAT…AIWM), and 91-111 (LATI…IDRF). Active-site residues include aspartate 118 and aspartate 140. Residues 131–151 (YSWYVFNLADVAIVAGVIALL) traverse the membrane as a helical segment.

Belongs to the peptidase A8 family.

The protein resides in the cell inner membrane. It catalyses the reaction Release of signal peptides from bacterial membrane prolipoproteins. Hydrolyzes -Xaa-Yaa-Zaa-|-(S,diacylglyceryl)Cys-, in which Xaa is hydrophobic (preferably Leu), and Yaa (Ala or Ser) and Zaa (Gly or Ala) have small, neutral side chains.. The protein operates within protein modification; lipoprotein biosynthesis (signal peptide cleavage). This protein specifically catalyzes the removal of signal peptides from prolipoproteins. This Nitrobacter hamburgensis (strain DSM 10229 / NCIMB 13809 / X14) protein is Lipoprotein signal peptidase.